A 142-amino-acid polypeptide reads, in one-letter code: Ribosome-binding factor A (142 aa).

Residues 123 to 142 (VQRDLDSAPEDDEPETGTGH) form a disordered region. The span at 129 to 142 (SAPEDDEPETGTGH) shows a compositional bias: acidic residues.

This sequence belongs to the RbfA family. Monomer. Binds 30S ribosomal subunits, but not 50S ribosomal subunits or 70S ribosomes.

The protein localises to the cytoplasm. One of several proteins that assist in the late maturation steps of the functional core of the 30S ribosomal subunit. Associates with free 30S ribosomal subunits (but not with 30S subunits that are part of 70S ribosomes or polysomes). Required for efficient processing of 16S rRNA. May interact with the 5'-terminal helix region of 16S rRNA. The sequence is that of Ribosome-binding factor A from Methylobacterium radiotolerans (strain ATCC 27329 / DSM 1819 / JCM 2831 / NBRC 15690 / NCIMB 10815 / 0-1).